The following is a 553-amino-acid chain: Solute carrier family 45 member 3 (553 aa).

A run of 11 helical transmembrane segments spans residues 19–39 (LLVN…ITYV), 52–72 (FMTM…PLLG), 88–108 (FIWA…RAGW), 120–140 (LELA…QVCF), 161–181 (YSVY…LPAI), 198–218 (CLFG…LLVA), 275–295 (FVAE…YTDF), 323–343 (MGSL…LVMD), 353–373 (AVYL…CLSH), 382–402 (AALT…LASL), and 522–542 (AYMV…TQVV).

The protein belongs to the glycoside-pentoside-hexuronide (GPH) cation symporter transporter (TC 2.A.2) family. Prostate specific. Expressed in all prostatic glandular cells. Expressed both in normal and cancerous prostates.

The protein resides in the membrane. It carries out the reaction sucrose(out) + H(+)(out) = sucrose(in) + H(+)(in). Functionally, proton-associated sucrose transporter. May be able to transport also glucose and fructose. The protein is Solute carrier family 45 member 3 of Homo sapiens (Human).